Here is a 434-residue protein sequence, read N- to C-terminus: Glutamyl-tRNA reductase 2 (434 aa).

Residues 57–60 (TCNR), Ser113, 118–120 (DFE), and Gln124 each bind substrate. Catalysis depends on Cys58, which acts as the Nucleophile. Position 193-198 (193-198 (GTGKIG)) interacts with NADP(+).

It belongs to the glutamyl-tRNA reductase family. In terms of assembly, homodimer.

It carries out the reaction (S)-4-amino-5-oxopentanoate + tRNA(Glu) + NADP(+) = L-glutamyl-tRNA(Glu) + NADPH + H(+). It participates in porphyrin-containing compound metabolism; protoporphyrin-IX biosynthesis; 5-aminolevulinate from L-glutamyl-tRNA(Glu): step 1/2. In terms of biological role, catalyzes the NADPH-dependent reduction of glutamyl-tRNA(Glu) to glutamate 1-semialdehyde (GSA). This chain is Glutamyl-tRNA reductase 2, found in Flavobacterium johnsoniae (strain ATCC 17061 / DSM 2064 / JCM 8514 / BCRC 14874 / CCUG 350202 / NBRC 14942 / NCIMB 11054 / UW101) (Cytophaga johnsonae).